Reading from the N-terminus, the 152-residue chain is Flagellar assembly factor FliW (152 aa).

It belongs to the FliW family. In terms of assembly, interacts with translational regulator CsrA and flagellin(s).

Its subcellular location is the cytoplasm. Acts as an anti-CsrA protein, binds CsrA and prevents it from repressing translation of its target genes, one of which is flagellin. Binds to flagellin and participates in the assembly of the flagellum. In Desulfitobacterium hafniense (strain Y51), this protein is Flagellar assembly factor FliW.